Here is a 70-residue protein sequence, read N- to C-terminus: Putative membrane protein insertion efficiency factor (70 aa).

It belongs to the UPF0161 family.

The protein localises to the cell membrane. Could be involved in insertion of integral membrane proteins into the membrane. This Rubrobacter xylanophilus (strain DSM 9941 / JCM 11954 / NBRC 16129 / PRD-1) protein is Putative membrane protein insertion efficiency factor.